The following is a 603-amino-acid chain: DNA mismatch repair protein MutL (603 aa).

It belongs to the DNA mismatch repair MutL/HexB family.

Its function is as follows. This protein is involved in the repair of mismatches in DNA. It is required for dam-dependent methyl-directed DNA mismatch repair. May act as a 'molecular matchmaker', a protein that promotes the formation of a stable complex between two or more DNA-binding proteins in an ATP-dependent manner without itself being part of a final effector complex. The chain is DNA mismatch repair protein MutL from Bradyrhizobium diazoefficiens (strain JCM 10833 / BCRC 13528 / IAM 13628 / NBRC 14792 / USDA 110).